The chain runs to 204 residues: ATP phosphoribosyltransferase (204 aa).

It belongs to the ATP phosphoribosyltransferase family. Short subfamily. Heteromultimer composed of HisG and HisZ subunits.

Its subcellular location is the cytoplasm. The enzyme catalyses 1-(5-phospho-beta-D-ribosyl)-ATP + diphosphate = 5-phospho-alpha-D-ribose 1-diphosphate + ATP. Its pathway is amino-acid biosynthesis; L-histidine biosynthesis; L-histidine from 5-phospho-alpha-D-ribose 1-diphosphate: step 1/9. Its function is as follows. Catalyzes the condensation of ATP and 5-phosphoribose 1-diphosphate to form N'-(5'-phosphoribosyl)-ATP (PR-ATP). Has a crucial role in the pathway because the rate of histidine biosynthesis seems to be controlled primarily by regulation of HisG enzymatic activity. This Staphylococcus aureus (strain Mu3 / ATCC 700698) protein is ATP phosphoribosyltransferase.